The chain runs to 334 residues: ABC transporter L-arabinose-binding periplasmic protein (334 aa).

A signal peptide spans 1-30; that stretch reads MNRTIRRHTLRALLAALCIAPLGMQGAARA.

This sequence belongs to the bacterial solute-binding protein 2 family. In terms of assembly, the complex is composed of two ATP-binding proteins (AraG), two transmembrane proteins (AraH) and a solute-binding protein (AraF).

It localises to the periplasm. Functionally, part of the ABC transporter complex AraFGH involved in L-arabinose import. Binds with high affinity to L-arabinose. This chain is ABC transporter L-arabinose-binding periplasmic protein (araF), found in Azospirillum brasilense.